Consider the following 132-residue polypeptide: Fatty acid-binding protein 12 (132 aa).

Residues arginine 107 and 127–129 (RTY) contribute to the a fatty acid site.

It belongs to the calycin superfamily. Fatty-acid binding protein (FABP) family. As to expression, highly expressed in adult retina and testis.

Functionally, may play a role in lipid transport. In Mus musculus (Mouse), this protein is Fatty acid-binding protein 12 (Fabp12).